The following is a 399-amino-acid chain: Protein IQ-DOMAIN 25 (399 aa).

The short motif at 1-8 (MRKNLTKL) is the Nuclear localization signal element. 2 calmodulin-binding regions span residues 81 to 91 (KERRTHAIAVA) and 99 to 110 (DAAVAAAKAAAA). 2 consecutive IQ domains span residues 130-158 (EHRAAMQIQCAFRGYLARKALRALRGVVK) and 159-181 (IQALVRGFLVRNQAAATLRSMEA). Disordered regions lie at residues 198-219 (NGNAAPARKSTERFSGSLENRN), 262-302 (SPLS…SPAR), and 346-377 (LRSHSAPRQRPESNASAGGWRRSIGGGGVRMQ). Over residues 285–294 (KFPTAQSTPR) the composition is skewed to polar residues.

It belongs to the IQD family. Binds to multiple calmodulin (CaM) in the presence of Ca(2+) and CaM-like proteins.

Its subcellular location is the nucleus. It is found in the cell membrane. In terms of biological role, may be involved in cooperative interactions with calmodulins or calmodulin-like proteins. Recruits calmodulin proteins to microtubules, thus being a potential scaffold in cellular signaling and trafficking. May associate with nucleic acids and regulate gene expression at the transcriptional or post-transcriptional level. The sequence is that of Protein IQ-DOMAIN 25 from Arabidopsis thaliana (Mouse-ear cress).